The chain runs to 428 residues: CinA-like protein (428 aa).

The protein belongs to the CinA family.

This is CinA-like protein from Gemmatimonas aurantiaca (strain DSM 14586 / JCM 11422 / NBRC 100505 / T-27).